Reading from the N-terminus, the 311-residue chain is Regulator of rDNA transcription protein 6 (311 aa).

The next 2 membrane-spanning stretches (helical) occupy residues 32-52 (PHLL…SAEL) and 271-291 (YLIV…IIVT).

Its subcellular location is the membrane. May be involved in the modulation of rDNA transcription. The chain is Regulator of rDNA transcription protein 6 (RRT6) from Saccharomyces cerevisiae (strain ATCC 204508 / S288c) (Baker's yeast).